The following is a 299-amino-acid chain: F-actin-capping protein subunit alpha-3 (299 aa).

At Ser-290 the chain carries Phosphoserine.

Belongs to the F-actin-capping protein alpha subunit family. As to quaternary structure, component of the F-actin capping complex, composed of a heterodimer of an alpha and a beta subunit. Component of the WASH complex, composed of F-actin-capping protein subunit alpha (CAPZA1, CAPZA2 or CAPZA3), F-actin-capping protein subunit beta (CAPZB), WASH (WASHC1, WASH2P, WASH3P, WASH4P, WASH5P or WASH6P), WASHC2 (WASHC2A or WASHC2C), WASHC3, WASHC4 and WASHC5. As to expression, expressed exclusively in testis and sperm. Highest expression is found in the neck region of ejaculated sperm with lower levels found in the tail and postacrosome region.

The protein resides in the cytoplasm. It localises to the cytoskeleton. In terms of biological role, F-actin-capping proteins bind in a Ca(2+)-independent manner to the fast growing ends of actin filaments (barbed end) thereby blocking the exchange of subunits at these ends. Unlike other capping proteins (such as gelsolin and severin), these proteins do not sever actin filaments. May play a role in the morphogenesis of spermatid. In Homo sapiens (Human), this protein is F-actin-capping protein subunit alpha-3 (CAPZA3).